A 219-amino-acid polypeptide reads, in one-letter code: Putative mediator of RNA polymerase II transcription subunit 10 (219 aa).

Residues M1–S39 show a composition bias toward low complexity. Disordered stretches follow at residues M1–E42 and K177–N219. 2 coiled-coil regions span residues Q13–E74 and E166–N219. Positions K177 to D192 are enriched in basic and acidic residues. Residues N194–N219 are compositionally biased toward low complexity.

The protein belongs to the Mediator complex subunit 10 family. Component of the Mediator complex.

The protein resides in the nucleus. In terms of biological role, component of the Mediator complex, a coactivator involved in the regulated transcription of nearly all RNA polymerase II-dependent genes. Mediator functions as a bridge to convey information from gene-specific regulatory proteins to the basal RNA polymerase II transcription machinery. Mediator is recruited to promoters by direct interactions with regulatory proteins and serves as a scaffold for the assembly of a functional preinitiation complex with RNA polymerase II and the general transcription factors. The chain is Putative mediator of RNA polymerase II transcription subunit 10 (med10) from Dictyostelium discoideum (Social amoeba).